The sequence spans 422 residues: Phagosome assembly factor 1 (422 aa).

It belongs to the PHAF1 family. In terms of assembly, interacts with BCAS3; the interaction is requrired for the association with the phagophore.

The protein localises to the cytoplasm. It is found in the preautophagosomal structure. In terms of biological role, plays a regulatory role in autophagic activity. In complex with BCAS3, associates with the autophagosome formation site during both non-selective and selective autophagy. The polypeptide is Phagosome assembly factor 1 (Phaf1) (Rattus norvegicus (Rat)).